We begin with the raw amino-acid sequence, 346 residues long: GTPase Obg (346 aa).

Positions 1–158 (MFIDKAKIYV…RWIELELKLL (158 aa)) constitute an Obg domain. An OBG-type G domain is found at 159-330 (ADVGIIGFPN…LINLIRETRD (172 aa)). Residues 165 to 172 (GFPNAGKS), 190 to 194 (FTTLT), 212 to 215 (DIPG), 282 to 285 (NKID), and 311 to 313 (SLI) contribute to the GTP site. Residues S172 and T192 each contribute to the Mg(2+) site.

This sequence belongs to the TRAFAC class OBG-HflX-like GTPase superfamily. OBG GTPase family. In terms of assembly, monomer. Mg(2+) is required as a cofactor.

It localises to the cytoplasm. Its function is as follows. An essential GTPase which binds GTP, GDP and possibly (p)ppGpp with moderate affinity, with high nucleotide exchange rates and a fairly low GTP hydrolysis rate. Plays a role in control of the cell cycle, stress response, ribosome biogenesis and in those bacteria that undergo differentiation, in morphogenesis control. This Sulfurihydrogenibium sp. (strain YO3AOP1) protein is GTPase Obg.